Here is a 436-residue protein sequence, read N- to C-terminus: F-box/LRR-repeat protein 20 (436 aa).

The region spanning 22–68 is the F-box domain; it reads AVINKKLPKELLLRIFSFLDVVTLCRCAQVSRAWNVLALDGSNWQRI. LRR repeat units follow at residues 74–100, 101–126, 127–152, 153–178, 179–204, 205–230, 231–256, 257–282, 283–308, 309–334, 335–363, 364–388, and 389–414; these read QRDI…SLRG, CLGV…NLNG, CTKT…DLAS, CTSI…NISW, CDQV…FLKG, CTQL…NLQT, CLQI…CASG, CSNI…EVAR, CSQL…DLEE, CVQI…SLSH, CELI…ELDN, CPLI…ELYD, and CQQI…AYFA. Thr417 bears the Phosphothreonine mark. Ser421 bears the Phosphoserine mark.

As to quaternary structure, interacts with SKP1 and CUL1.

It is found in the cytoplasm. Functionally, substrate-recognition component of the SCF (SKP1-CUL1-F-box protein)-type E3 ubiquitin ligase complex. Role in neural transmission. The polypeptide is F-box/LRR-repeat protein 20 (FBXL20) (Bos taurus (Bovine)).